Here is a 489-residue protein sequence, read N- to C-terminus: Betaine aldehyde dehydrogenase (489 aa).

Residues Thr26 and Asp93 each coordinate K(+). Position 150–152 (150–152 (GAW)) interacts with NAD(+). Lys162 functions as the Charge relay system in the catalytic mechanism. 176 to 179 (KPSE) serves as a coordination point for NAD(+). K(+) is bound at residue Ile180. An NAD(+)-binding site is contributed by 229-232 (GVET). Leu245 contacts K(+). Residue Glu251 is the Proton acceptor of the active site. NAD(+) is bound by residues Gly253, Cys285, and Glu386. The Nucleophile role is filled by Cys285. A Cysteine sulfenic acid (-SOH) modification is found at Cys285. K(+) is bound by residues Lys456 and Gly459. Catalysis depends on Glu463, which acts as the Charge relay system.

It belongs to the aldehyde dehydrogenase family. Dimer of dimers. The cofactor is K(+).

It carries out the reaction betaine aldehyde + NAD(+) + H2O = glycine betaine + NADH + 2 H(+). It functions in the pathway amine and polyamine biosynthesis; betaine biosynthesis via choline pathway; betaine from betaine aldehyde: step 1/1. Involved in the biosynthesis of the osmoprotectant glycine betaine. Catalyzes the irreversible oxidation of betaine aldehyde to the corresponding acid. This chain is Betaine aldehyde dehydrogenase, found in Paraburkholderia xenovorans (strain LB400).